The chain runs to 276 residues: Undecaprenyl-diphosphatase (276 aa).

Helical transmembrane passes span 84-104, 115-135, 188-208, 222-242, and 250-270; these read YRLG…GLFF, LWVV…AEYV, FGFL…LPDA, QLLV…AWLL, and MYWF…LLAT.

Belongs to the UppP family.

Its subcellular location is the cell membrane. It carries out the reaction di-trans,octa-cis-undecaprenyl diphosphate + H2O = di-trans,octa-cis-undecaprenyl phosphate + phosphate + H(+). In terms of biological role, catalyzes the dephosphorylation of undecaprenyl diphosphate (UPP). Confers resistance to bacitracin. The protein is Undecaprenyl-diphosphatase of Mycobacterium tuberculosis (strain ATCC 25177 / H37Ra).